The sequence spans 331 residues: dTDP-glucose 4,6-dehydratase (331 aa).

Residues Phe11 to Ile12, Asp33 to Thr36, Asp57 to Ile58, Phe77 to Thr81, and Ser96 contribute to the NAD(+) site. Thr81 is a substrate binding site. Thr120 contacts substrate. Asp121 (proton donor) is an active-site residue. Active-site proton acceptor residues include Glu122 and Tyr147. Tyr147–Lys151 is a binding site for NAD(+). Asn176 is a binding site for substrate. Asn177 is a binding site for NAD(+). Substrate is bound by residues Lys186–Gln191, Lys202–Tyr204, Arg211, Asn246, and Asp269–His273.

The protein belongs to the NAD(P)-dependent epimerase/dehydratase family. dTDP-glucose dehydratase subfamily. As to quaternary structure, homodimer. Requires NAD(+) as cofactor.

The enzyme catalyses dTDP-alpha-D-glucose = dTDP-4-dehydro-6-deoxy-alpha-D-glucose + H2O. The protein operates within carbohydrate biosynthesis; dTDP-L-rhamnose biosynthesis. Its function is as follows. Catalyzes the dehydration of dTDP-D-glucose to form dTDP-6-deoxy-D-xylo-4-hexulose via a three-step process involving oxidation, dehydration and reduction. Involved in the biosynthesis of the dTDP-L-rhamnose which is a component of the critical linker, D-N-acetylglucosamine-L-rhamnose disaccharide, which connects the galactan region of arabinogalactan to peptidoglycan via a phosphodiester linkage. The polypeptide is dTDP-glucose 4,6-dehydratase (rmlB) (Mycolicibacterium smegmatis (strain ATCC 700084 / mc(2)155) (Mycobacterium smegmatis)).